The primary structure comprises 99 residues: Co-chaperonin GroES (99 aa).

This sequence belongs to the GroES chaperonin family. In terms of assembly, heptamer of 7 subunits arranged in a ring. Interacts with the chaperonin GroEL.

The protein localises to the cytoplasm. Together with the chaperonin GroEL, plays an essential role in assisting protein folding. The GroEL-GroES system forms a nano-cage that allows encapsulation of the non-native substrate proteins and provides a physical environment optimized to promote and accelerate protein folding. GroES binds to the apical surface of the GroEL ring, thereby capping the opening of the GroEL channel. The sequence is that of Co-chaperonin GroES from Corynebacterium efficiens (strain DSM 44549 / YS-314 / AJ 12310 / JCM 11189 / NBRC 100395).